The primary structure comprises 819 residues: DNA topoisomerase 4 subunit A (819 aa).

The Topo IIA-type catalytic domain occupies Leu30–Leu496. The active-site O-(5'-phospho-DNA)-tyrosine intermediate is the Tyr118.

This sequence belongs to the type II topoisomerase GyrA/ParC subunit family. ParC type 2 subfamily. As to quaternary structure, heterotetramer composed of ParC and ParE.

It is found in the cell membrane. It carries out the reaction ATP-dependent breakage, passage and rejoining of double-stranded DNA.. In terms of biological role, topoisomerase IV is essential for chromosome segregation. It relaxes supercoiled DNA. Performs the decatenation events required during the replication of a circular DNA molecule. The protein is DNA topoisomerase 4 subunit A of Streptococcus pyogenes serotype M6 (strain ATCC BAA-946 / MGAS10394).